A 406-amino-acid polypeptide reads, in one-letter code: Argininosuccinate synthase (406 aa).

ATP is bound by residues 12–20 (AYSGGLDTS) and Ala-39. L-citrulline is bound by residues Tyr-90 and Ser-95. Gly-120 contributes to the ATP binding site. L-aspartate-binding residues include Thr-122, Asn-126, and Asp-127. Asn-126 is an L-citrulline binding site. The L-citrulline site is built by Arg-130, Ser-179, Ser-188, Glu-264, and Tyr-276.

Belongs to the argininosuccinate synthase family. Type 1 subfamily. In terms of assembly, homotetramer.

It localises to the cytoplasm. The catalysed reaction is L-citrulline + L-aspartate + ATP = 2-(N(omega)-L-arginino)succinate + AMP + diphosphate + H(+). The protein operates within amino-acid biosynthesis; L-arginine biosynthesis; L-arginine from L-ornithine and carbamoyl phosphate: step 2/3. The chain is Argininosuccinate synthase from Geotalea daltonii (strain DSM 22248 / JCM 15807 / FRC-32) (Geobacter daltonii).